A 340-amino-acid chain; its full sequence is CMP-N-acetylneuraminate-beta-galactosamide-alpha-2,3-sialyltransferase 1 (340 aa).

Residues 1 to 13 (MVTLRKRTLKVLT) lie on the Cytoplasmic side of the membrane. The helical; Signal-anchor for type II membrane protein transmembrane segment at 14 to 34 (FLVLFIFLTSFFLNYSHTMVA) threads the bilayer. Over 35–340 (TTWFPKQMVL…INKIRIFKGR (306 aa)) the chain is Lumenal. 3 cysteine pairs are disulfide-bonded: cysteine 59–cysteine 64, cysteine 61–cysteine 139, and cysteine 142–cysteine 281. N-linked (GlcNAc...) asparagine glycosylation is present at asparagine 79. Glutamine 105 contacts substrate. Asparagine 114 is a glycosylation site (N-linked (GlcNAc...) asparagine). 2 residues coordinate substrate: asparagine 147 and asparagine 170. A glycan (N-linked (GlcNAc...) asparagine) is linked at asparagine 201. Substrate contacts are provided by tyrosine 230, tyrosine 266, glycine 270, glycine 290, histidine 299, and histidine 316. A glycan (N-linked (GlcNAc...) asparagine) is linked at asparagine 323.

It belongs to the glycosyltransferase 29 family. In terms of processing, the soluble form derives from the membrane form by proteolytic processing. Expressed in several tissues. Highest expression in lung, liver, skeletal muscle, kidney, pancreas, spleen and placenta.

It is found in the golgi apparatus. It localises to the golgi stack membrane. Its subcellular location is the trans-Golgi network membrane. The protein resides in the secreted. The catalysed reaction is a beta-D-galactosyl-(1-&gt;3)-N-acetyl-alpha-D-galactosaminyl derivative + CMP-N-acetyl-beta-neuraminate = an N-acetyl-alpha-neuraminyl-(2-&gt;3)-beta-D-galactosyl-(1-&gt;3)-N-acetyl-alpha-D-galactosaminyl derivative + CMP + H(+). It carries out the reaction a ganglioside GM1 + CMP-N-acetyl-beta-neuraminate = a ganglioside GD1a + CMP + H(+). The enzyme catalyses a ganglioside GM1 (d18:1(4E)) + CMP-N-acetyl-beta-neuraminate = a ganglioside GD1a (d18:1(4E)) + CMP + H(+). It catalyses the reaction ganglioside GM1 (d18:1(4E)/18:0) + CMP-N-acetyl-beta-neuraminate = ganglioside GD1a (18:1(4E)/18:0) + CMP + H(+). The catalysed reaction is a ganglioside GA1 + CMP-N-acetyl-beta-neuraminate = a ganglioside GM1b + CMP + H(+). It carries out the reaction a ganglioside GA1 (d18:1(4E)) + CMP-N-acetyl-beta-neuraminate = a ganglioside GM1b (d18:1(4E)) + CMP + H(+). The enzyme catalyses a ganglioside GD1b + CMP-N-acetyl-beta-neuraminate = a ganglioside GT1b + CMP + H(+). It catalyses the reaction a 3-O-[beta-D-galactosyl-(1-&gt;3)-N-acetyl-alpha-D-galactosaminyl]-L-threonyl-[protein] + CMP-N-acetyl-beta-neuraminate = a 3-O-[N-acetyl-alpha-neuraminyl-(2-&gt;3)-beta-D-galactosyl-(1-&gt;3)-N-acetyl-alpha-D-galactosaminyl]-L-threonyl-[protein] + CMP + H(+). The catalysed reaction is a 3-O-[beta-D-galactosyl-(1-&gt;3)-N-acetyl-alpha-D-galactosaminyl]-L-seryl-[protein] + CMP-N-acetyl-beta-neuraminate = 3-O-[N-acetyl-alpha-neuraminyl-(2-&gt;3)-beta-D-galactosyl-(1-&gt;3)-N-acetyl-alpha-D-galactosaminyl]-L-seryl-[protein] + CMP + H(+). It functions in the pathway protein modification; protein glycosylation. Its pathway is glycolipid biosynthesis. Its function is as follows. A beta-galactoside alpha2-&gt;3 sialyltransferase involved in terminal sialylation of glycoproteins and glycolipids. Catalyzes the transfer of sialic acid (N-acetyl-neuraminic acid; Neu5Ac) from the nucleotide sugar donor CMP-Neu5Ac onto acceptor Galbeta-(1-&gt;3)-GalNAc-terminated glycoconjugates through an alpha2-3 linkage. Adds sialic acid to the core 1 O-glycan, Galbeta-(1-&gt;3)-GalNAc-O-Ser/Thr, which is a major structure of mucin-type O-glycans. As part of a homeostatic mechanism that regulates CD8-positive T cell numbers, sialylates core 1 O-glycans of T cell glycoproteins, SPN/CD43 and PTPRC/CD45. Prevents premature apoptosis of thymic CD8-positive T cells prior to peripheral emigration, whereas in the secondary lymphoid organs controls the survival of CD8-positive memory T cells generated following a successful immune response. Transfers sialic acid to asialofetuin, presumably onto Galbeta-(1-&gt;3)-GalNAc-O-Ser. Sialylates GM1a, GA1 and GD1b gangliosides to form GD1a, GM1b and GT1b, respectively. The sequence is that of CMP-N-acetylneuraminate-beta-galactosamide-alpha-2,3-sialyltransferase 1 from Homo sapiens (Human).